Consider the following 251-residue polypeptide: Probable phosphatase Sputcn32_1369 (251 aa).

The Zn(2+) site is built by histidine 8, histidine 10, histidine 16, histidine 41, glutamate 74, histidine 102, histidine 132, aspartate 193, and histidine 195.

The protein belongs to the PHP family. Zn(2+) is required as a cofactor.

The protein is Probable phosphatase Sputcn32_1369 of Shewanella putrefaciens (strain CN-32 / ATCC BAA-453).